The sequence spans 231 residues: Fibrillarin-like rRNA/tRNA 2'-O-methyltransferase (231 aa).

S-adenosyl-L-methionine contacts are provided by residues 89 to 90 (TT), 108 to 109 (EF), 133 to 134 (DA), and 153 to 156 (DIAQ).

It belongs to the methyltransferase superfamily. Fibrillarin family. As to quaternary structure, interacts with nop5. Component of box C/D small ribonucleoprotein (sRNP) particles that contain rpl7ae, FlpA and nop5, plus a guide RNA.

Its function is as follows. Involved in pre-rRNA and tRNA processing. Utilizes the methyl donor S-adenosyl-L-methionine to catalyze the site-specific 2'-hydroxyl methylation of ribose moieties in rRNA and tRNA. Site specificity is provided by a guide RNA that base pairs with the substrate. Methylation occurs at a characteristic distance from the sequence involved in base pairing with the guide RNA. The chain is Fibrillarin-like rRNA/tRNA 2'-O-methyltransferase from Sulfolobus acidocaldarius (strain ATCC 33909 / DSM 639 / JCM 8929 / NBRC 15157 / NCIMB 11770).